Here is a 910-residue protein sequence, read N- to C-terminus: Disease resistance protein RPH8A (910 aa).

Positions 15–57 (DLLSRESERLQGIDEQLDGLKRQLRSLQSLLKDADAKKHGSDR) form a coiled coil. The 314-residue stretch at 146–459 (RQRVQREIRQ…AEGIYDGSTI (314 aa)) folds into the NB-ARC domain. 192 to 199 (GMGGIGKT) contacts ATP.

The protein belongs to the disease resistance NB-LRR family. RPP8/HRT subfamily.

Disease resistance protein. Resistance proteins guard the plant against pathogens that contain an appropriate avirulence protein via an indirect interaction with this avirulence protein. That triggers a defense system including the hypersensitive response, which restricts the pathogen growth. In contrast to RPP8, it does not specifically recognize the Emco5 avirulence protein from Hyaloperonospora parasitica. This is Disease resistance protein RPH8A (RPH8A) from Arabidopsis thaliana (Mouse-ear cress).